The following is a 180-amino-acid chain: uncharacterized protein (180 aa).

Positions L35–L163 constitute a Nudix hydrolase domain. The Nudix box signature appears at G72 to G94. Mg(2+) contacts are provided by E88 and E92.

This sequence belongs to the Nudix hydrolase family. Requires Mg(2+) as cofactor.

This is an uncharacterized protein from Shigella flexneri.